The following is a 159-amino-acid chain: Cyclic pyranopterin monophosphate synthase (159 aa).

Substrate contacts are provided by residues 75-77 (LCH) and 113-114 (ME). The active site involves D128.

This sequence belongs to the MoaC family. In terms of assembly, homohexamer; trimer of dimers.

The enzyme catalyses (8S)-3',8-cyclo-7,8-dihydroguanosine 5'-triphosphate = cyclic pyranopterin phosphate + diphosphate. Its pathway is cofactor biosynthesis; molybdopterin biosynthesis. In terms of biological role, catalyzes the conversion of (8S)-3',8-cyclo-7,8-dihydroguanosine 5'-triphosphate to cyclic pyranopterin monophosphate (cPMP). The sequence is that of Cyclic pyranopterin monophosphate synthase from Yersinia pseudotuberculosis serotype O:3 (strain YPIII).